The primary structure comprises 325 residues: NADH-quinone oxidoreductase subunit H (325 aa).

8 helical membrane-spanning segments follow: residues 11–31 (VLIA…CGAL), 81–101 (MIFT…FAIV), 114–134 (IGIL…LFAG), 149–169 (ASAQ…GVVA), 186–206 (MWNV…GVAV), 237–257 (FFVG…TMFF), 265–285 (LPPF…FILI), and 304–324 (ICLP…LYNA).

It belongs to the complex I subunit 1 family. In terms of assembly, NDH-1 is composed of 13 different subunits. Subunits NuoA, H, J, K, L, M, N constitute the membrane sector of the complex.

Its subcellular location is the cell inner membrane. It carries out the reaction a quinone + NADH + 5 H(+)(in) = a quinol + NAD(+) + 4 H(+)(out). Functionally, NDH-1 shuttles electrons from NADH, via FMN and iron-sulfur (Fe-S) centers, to quinones in the respiratory chain. The immediate electron acceptor for the enzyme in this species is believed to be ubiquinone. Couples the redox reaction to proton translocation (for every two electrons transferred, four hydrogen ions are translocated across the cytoplasmic membrane), and thus conserves the redox energy in a proton gradient. This subunit may bind ubiquinone. This is NADH-quinone oxidoreductase subunit H from Photorhabdus laumondii subsp. laumondii (strain DSM 15139 / CIP 105565 / TT01) (Photorhabdus luminescens subsp. laumondii).